A 594-amino-acid chain; its full sequence is Chondroitin sulfate proteoglycan 5 (594 aa).

Over residues 1–12 (MGVGGTSASDTA) the composition is skewed to polar residues. A signal peptide spans 1-18 (MGVGGTSASDTALSLCPT). 2 disordered regions span residues 1–325 (MGVG…PWGL) and 343–418 (TTSF…SECR). The Extracellular segment spans residues 19–481 (APEWPPRNGS…AIVTDFQVLC (463 aa)). N-linked (GlcNAc...) asparagine glycosylation is found at N26 and N44. Low complexity predominate over residues 140-181 (SPGLGLSSPGPNLGLPSLDLPNPNLGLPDPNLGLPNPSLGLP). Pro residues-rich tracts occupy residues 182-195 (SPGP…PNPN) and 219-229 (IPLPSPSPGPG). Residues 248 to 259 (PQPSSSPAPAQR) are compositionally biased toward low complexity. The span at 298–310 (GGHGPGGGHGAGG) shows a compositional bias: gly residues. Residues 338-377 (ADFYPTTSFYAEGDDDAEEELEEDEEEEEEEDGGLEDENG) form an interaction with TNC and TNR region. The span at 349–375 (EGDDDAEEELEEDEEEEEEEDGGLEDE) shows a compositional bias: acidic residues. N413 and N425 each carry an N-linked (GlcNAc...) asparagine glycan. The EGF-like domain occupies 429–471 (RSVCDLVPSYCHNGGQCYLVESHGAFCRCNTQDYTWHKGTRCE). Disulfide bonds link C432–C445, C439–C455, and C457–C470. The helical transmembrane segment at 482–502 (VAVGSAALVLLLLFMLTVFFA) threads the bilayer. The Cytoplasmic segment spans residues 503 to 594 (KKLYLLKTEN…GVPCLHNNLG (92 aa)). The interval 535-594 (TIAEGSHPNDDPGAPHKLQDPLKPGLKDEEPLSILSTAPEEGSKGEPGGCGVPCLHNNLG) is disordered. Residues 541-564 (HPNDDPGAPHKLQDPLKPGLKDEE) are compositionally biased toward basic and acidic residues.

As to quaternary structure, binds TNC and TNR. The 80 kDa form but not the 140 kDa form can bind TNC and TNR when expressed at the cell surface. Post-translationally, different forms exist: the 140 kDa form (also reported as 130 kDa), which probably consists of the entire protein, and the 38 and 80 kDa forms, which are probably cleaved in their N-terminus. Increase in synaptic activity, results in shedding of the extracellular domain and expression at the cell surface of a 38 kDa form. A form of 200 kDa has also been reported, which is probably hyperglycosylated. In terms of processing, N-glycosylated. O-glycosylated; contains chondroitin sulfate glycans. Part-time proteoglycan, the 200 kDa form is the only one containing chondroitin sulfate glycans. Expressed in astroglial and neuronal surfaces in different parts of the embryonic brain. Expressed in adult brain and retina (at protein level).

It localises to the cell membrane. In terms of biological role, may function as a growth and differentiation factor involved in neuritogenesis and more particularly in neurite extension. In Gallus gallus (Chicken), this protein is Chondroitin sulfate proteoglycan 5 (CSPG5).